The sequence spans 611 residues: Chaperone protein HtpG (611 aa).

Positions 1-326 are a; substrate-binding; that stretch reads MSETLERHAF…TEDLPLNVSR (326 aa). Residues 327 to 536 are b; it reads EMLQATPVLA…SGGPDLQMQR (210 aa). The tract at residues 537–611 is c; that stretch reads LLRRAGRGFG…RVAAALAAQA (75 aa).

The protein belongs to the heat shock protein 90 family. In terms of assembly, homodimer.

Its subcellular location is the cytoplasm. Its function is as follows. Molecular chaperone. Has ATPase activity. The polypeptide is Chaperone protein HtpG (Methylobacterium sp. (strain 4-46)).